The primary structure comprises 359 residues: Beta-1,3-galactosyltransferase bre-2 (359 aa).

Topologically, residues 1 to 11 are cytoplasmic; the sequence is MRQSRRASSRV. The helical; Signal-anchor for type II membrane protein transmembrane segment at 12-29 threads the bilayer; sequence NRLVVIFIIVASGFLLLY. Residues 30–359 are Lumenal-facing; it reads KNTQQFTQID…NPDLEELKEK (330 aa). N-linked (GlcNAc...) asparagine glycans are attached at residues Asn73, Asn163, and Asn209.

This sequence belongs to the glycosyltransferase 31 family.

The protein localises to the golgi apparatus membrane. It functions in the pathway protein modification; protein glycosylation. Functionally, transfers N-acetylgalactosamine onto carbohydrate substrates. Involved in susceptibility to pore-forming crystal toxins in conjunction with bre-1, bre-3, bre-4, and bre-5. Involved in resistance to the nematotoxic C.cinerea galectin Cgl2. This is Beta-1,3-galactosyltransferase bre-2 from Caenorhabditis elegans.